A 394-amino-acid polypeptide reads, in one-letter code: Phosphopentomutase (394 aa).

Mn(2+) is bound by residues Asp14, Asp287, His292, Asp328, His329, and His340.

The protein belongs to the phosphopentomutase family. Mn(2+) is required as a cofactor.

The protein resides in the cytoplasm. The catalysed reaction is 2-deoxy-alpha-D-ribose 1-phosphate = 2-deoxy-D-ribose 5-phosphate. It catalyses the reaction alpha-D-ribose 1-phosphate = D-ribose 5-phosphate. It functions in the pathway carbohydrate degradation; 2-deoxy-D-ribose 1-phosphate degradation; D-glyceraldehyde 3-phosphate and acetaldehyde from 2-deoxy-alpha-D-ribose 1-phosphate: step 1/2. Isomerase that catalyzes the conversion of deoxy-ribose 1-phosphate (dRib-1-P) and ribose 1-phosphate (Rib-1-P) to deoxy-ribose 5-phosphate (dRib-5-P) and ribose 5-phosphate (Rib-5-P), respectively. The polypeptide is Phosphopentomutase (Listeria monocytogenes serovar 1/2a (strain ATCC BAA-679 / EGD-e)).